We begin with the raw amino-acid sequence, 286 residues long: Acetyl-coenzyme A carboxylase carboxyl transferase subunit beta (286 aa).

The CoA carboxyltransferase N-terminal domain occupies leucine 27–isoleucine 286. Residues cysteine 31, cysteine 34, cysteine 50, and cysteine 52 each contribute to the Zn(2+) site. The C4-type zinc finger occupies cysteine 31–cysteine 52.

Belongs to the AccD/PCCB family. As to quaternary structure, acetyl-CoA carboxylase is a heterohexamer composed of biotin carboxyl carrier protein (AccB), biotin carboxylase (AccC) and two subunits each of ACCase subunit alpha (AccA) and ACCase subunit beta (AccD). It depends on Zn(2+) as a cofactor.

The protein resides in the cytoplasm. It catalyses the reaction N(6)-carboxybiotinyl-L-lysyl-[protein] + acetyl-CoA = N(6)-biotinyl-L-lysyl-[protein] + malonyl-CoA. It functions in the pathway lipid metabolism; malonyl-CoA biosynthesis; malonyl-CoA from acetyl-CoA: step 1/1. Its function is as follows. Component of the acetyl coenzyme A carboxylase (ACC) complex. Biotin carboxylase (BC) catalyzes the carboxylation of biotin on its carrier protein (BCCP) and then the CO(2) group is transferred by the transcarboxylase to acetyl-CoA to form malonyl-CoA. The protein is Acetyl-coenzyme A carboxylase carboxyl transferase subunit beta of Exiguobacterium sibiricum (strain DSM 17290 / CCUG 55495 / CIP 109462 / JCM 13490 / 255-15).